Consider the following 246-residue polypeptide: UDP-N-acetyl-D-mannosaminuronic acid transferase (246 aa).

It belongs to the glycosyltransferase 26 family.

It catalyses the reaction UDP-N-acetyl-alpha-D-mannosaminouronate + N-acetyl-alpha-D-glucosaminyl-di-trans,octa-cis-undecaprenyl diphosphate = beta-D-ManNAcA-(1-&gt;4)-alpha-D-GlcNAc-di-trans,octa-cis-undecaprenyl diphosphate + UDP + H(+). It functions in the pathway bacterial outer membrane biogenesis; enterobacterial common antigen biosynthesis. Catalyzes the synthesis of Und-PP-GlcNAc-ManNAcA (Lipid II), the second lipid-linked intermediate involved in enterobacterial common antigen (ECA) synthesis. This chain is UDP-N-acetyl-D-mannosaminuronic acid transferase, found in Klebsiella pneumoniae (strain 342).